A 545-amino-acid polypeptide reads, in one-letter code: Chaperonin GroEL 2 (545 aa).

ATP contacts are provided by residues 29 to 32 (TLGP), 86 to 90 (DGTTT), G413, 479 to 481 (NAA), and D495.

The protein belongs to the chaperonin (HSP60) family. In terms of assembly, forms a cylinder of 14 subunits composed of two heptameric rings stacked back-to-back. Interacts with the co-chaperonin GroES.

The protein localises to the cytoplasm. It carries out the reaction ATP + H2O + a folded polypeptide = ADP + phosphate + an unfolded polypeptide.. Its function is as follows. Together with its co-chaperonin GroES, plays an essential role in assisting protein folding. The GroEL-GroES system forms a nano-cage that allows encapsulation of the non-native substrate proteins and provides a physical environment optimized to promote and accelerate protein folding. The polypeptide is Chaperonin GroEL 2 (Prochlorococcus marinus (strain MIT 9312)).